Reading from the N-terminus, the 124-residue chain is Small ribosomal subunit protein uS13 (124 aa).

A disordered region spans residues 94–124 (GLPLRGQRTKNNSRTRKGKRKTVANKKKATK). Positions 100–124 (QRTKNNSRTRKGKRKTVANKKKATK) are enriched in basic residues.

It belongs to the universal ribosomal protein uS13 family. In terms of assembly, part of the 30S ribosomal subunit. Forms a loose heterodimer with protein S19. Forms two bridges to the 50S subunit in the 70S ribosome.

Functionally, located at the top of the head of the 30S subunit, it contacts several helices of the 16S rRNA. In the 70S ribosome it contacts the 23S rRNA (bridge B1a) and protein L5 of the 50S subunit (bridge B1b), connecting the 2 subunits; these bridges are implicated in subunit movement. Contacts the tRNAs in the A and P-sites. In Flavobacterium psychrophilum (strain ATCC 49511 / DSM 21280 / CIP 103535 / JIP02/86), this protein is Small ribosomal subunit protein uS13.